We begin with the raw amino-acid sequence, 279 residues long: Cell division protein FtsQ (279 aa).

The disordered stretch occupies residues 1–28 (MTPMKKQLDKSLGSRRGATATRAKERAD). Topologically, residues 1 to 48 (MTPMKKQLDKSLGSRRGATATRAKERADNRNTGPAAIVRLLAFIPWNR) are cytoplasmic. Residues 49-69 (VLLHVSIFCFWLLVLSALIAG) traverse the membrane as a helical segment. The Periplasmic portion of the chain corresponds to 70 to 279 (VKWLDRPVAT…WKADVTPEQG (210 aa)). The 70-residue stretch at 75–144 (RPVATVQVVG…DAVQVDLEEE (70 aa)) folds into the POTRA domain.

Belongs to the FtsQ/DivIB family. FtsQ subfamily. As to quaternary structure, part of a complex composed of FtsB, FtsL and FtsQ.

It is found in the cell inner membrane. Functionally, essential cell division protein. May link together the upstream cell division proteins, which are predominantly cytoplasmic, with the downstream cell division proteins, which are predominantly periplasmic. May control correct divisome assembly. This chain is Cell division protein FtsQ, found in Hahella chejuensis (strain KCTC 2396).